A 274-amino-acid chain; its full sequence is Lipid phosphate phosphatase 1 (274 aa).

Residues 1-15 (MISVMADEKHKEYFK) lie on the Lumenal side of the membrane. A helical transmembrane segment spans residues 16-33 (LYYFQYMIIGLCTILFLY). Residues 34 to 69 (SEISLVPRGQNIEFSLDDPSISKRYVPNELVGPLEC) lie on the Cytoplasmic side of the membrane. The chain crosses the membrane as a helical span at residues 70–87 (LILSVGLSNMVVFWTCMF). Residues 88-117 (DKDLLKKNRVKRLRERPDGISNDFHFMHTS) are Lumenal-facing. A helical transmembrane segment spans residues 118-139 (ILCLMLIISINAALTGALKLII). The tract at residues 136 to 144 (KLIIGNLRP) is phosphatase sequence motif I. Residues 140 to 189 (GNLRPDFVDRCIPDLQKMSDSDSLVFGLDICKQTNKWILYEGLKSTPSGH) are Cytoplasmic-facing. A phosphatase sequence motif II region spans residues 186–189 (PSGH). The helical transmembrane segment at 190–203 (SSFIVSTMGFTYLW) threads the bilayer. Over 204 to 214 (QRVFTTRNTRS) the chain is Lumenal. The chain crosses the membrane as a helical span at residues 215 to 231 (CIWCPLLALVVMVSRVI). The phosphatase sequence motif III stretch occupies residues 228–239 (SRVIDHRHHWYD). Residues 232 to 237 (DHRHHW) are Cytoplasmic-facing. The chain crosses the membrane as a helical span at residues 238-255 (YDVVSGAVLAFLVIYCCW). Residues 256–274 (KWTFTNLAKRDILPSPVSV) lie on the Lumenal side of the membrane.

The protein belongs to the PA-phosphatase related phosphoesterase family.

It is found in the golgi apparatus membrane. It carries out the reaction a 1,2-diacyl-sn-glycerol 3-diphosphate + H2O = a 1,2-diacyl-sn-glycero-3-phosphate + phosphate + H(+). The enzyme catalyses a 1,2-diacyl-sn-glycero-3-phosphate + H2O = a 1,2-diacyl-sn-glycerol + phosphate. It catalyses the reaction a 1-acyl-sn-glycero-3-phosphate + H2O = a 1-acyl-sn-glycerol + phosphate. PA phosphatase activity is magnesium ion-independent and potently inhibited by N-ethylmaleimide. Also inhibited by phenylglyoxal and propranolol. In terms of biological role, catalyzes the dephosphorylation of diacylglycerol diphosphate (DGPP) to phosphatidate (PA) and the subsequent dephosphorylation of PA to diacylglycerol (DAG). Together with DPP1, regulates intracellular DGPP and PA levels which are phospholipid molecules believed to play a signaling role in stress response. Can also use lysophosphatidic acid (LPA) as a substrate. Substrate preference is PA &gt; DGPP &gt; LPA. The chain is Lipid phosphate phosphatase 1 (LPP1) from Saccharomyces cerevisiae (strain ATCC 204508 / S288c) (Baker's yeast).